Here is a 350-residue protein sequence, read N- to C-terminus: D-alanine--D-alanine ligase (350 aa).

An ATP-grasp domain is found at Asn-133–Gly-334. Phe-161–Gln-216 contributes to the ATP binding site. 3 residues coordinate Mg(2+): Asp-288, Glu-300, and Asn-302.

Belongs to the D-alanine--D-alanine ligase family. The cofactor is Mg(2+). Mn(2+) is required as a cofactor.

Its subcellular location is the cytoplasm. It catalyses the reaction 2 D-alanine + ATP = D-alanyl-D-alanine + ADP + phosphate + H(+). It participates in cell wall biogenesis; peptidoglycan biosynthesis. Functionally, cell wall formation. This is D-alanine--D-alanine ligase from Finegoldia magna (strain ATCC 29328 / DSM 20472 / WAL 2508) (Peptostreptococcus magnus).